A 59-amino-acid polypeptide reads, in one-letter code: Prokaryotic ubiquitin-like protein UBact (59 aa).

Residues 1-59 are disordered; the sequence is MEMTDPLRREEKKESSPDPKEESGPSRPDVSRPGRDSLLKRMKKVDPKQSEKYKQRTGQ. At Gln59 the chain carries Deamidated glutamine. Gln59 participates in a covalent cross-link: Isoglutamyl lysine isopeptide (Gln-Lys) (interchain with K-? in acceptor proteins).

Belongs to the ubiquitin-like protein UBact family. In terms of processing, may be modified by deamidation of its C-terminal glutamine to glutamate by the adjacently encoded deamidase. This could be a prerequisite to the subsequent conjugation, as shown in the other prokaryotic ubiquitin-like protein Pup.

Its function is as follows. May function as a protein modifier covalently attached to lysine residues of substrate proteins. This may serve to target the modified proteins for degradation by proteasomes. The chain is Prokaryotic ubiquitin-like protein UBact from Nitrospina gracilis (strain 3/211).